A 559-amino-acid chain; its full sequence is MSLEVVRAAAGMVLAELYVSDREGNDVTGDGTKEKPFKTGLKALMTVGKEPFPTIYVDSQKENERWDVISKSQMKNIRKLWHREQMKSESREKKEAEDNLRREKNLEEAKKITIKNDPSLPEPKCVKIRELKGYRGQRIKVFGWVHRLRRQGKNLMFLVLRDGTGFLQCVLSDDLCQCYNGVVLSTESSVAVYGVLNLTPKGKQAPGGHELSCDFWELIGLAPAGGADNLINEESDVDVQLNNRHMMIRGENMSKILKARSVITRCFRDHFFDRGYHEITPPTLVQTQVEGGATLFKLDYFGEEAYLTQSSQLYLETCIPALGDVFCIAQSYRAEQSRTRRHLAEYTHVEAECPFLTFEELLNRLEDLVCDVVDRVLKSPAGNIVRDLNPNFKPPKRPFKRMNYSDAIVWLKEHNIKKEDGTFYEFGEDIPEAPERLMTDTINEPILLCRFPVEIKSFYMQRCPEDPRLTESVDVLMPNVGEIVGGSMRIWDNEEILAGYKREGIDPTPYYWYTDQRKYGTCPHGGYGLGLERFLTWILDRYHIRDVCLYPRFVQRCKP.

Ser-72 carries the post-translational modification Phosphoserine. An N6-acetyllysine mark is found at Lys-255 and Lys-501.

The protein belongs to the class-II aminoacyl-tRNA synthetase family.

It localises to the cytoplasm. The catalysed reaction is tRNA(Asn) + L-asparagine + ATP = L-asparaginyl-tRNA(Asn) + AMP + diphosphate + H(+). In Bos taurus (Bovine), this protein is Asparagine--tRNA ligase, cytoplasmic (NARS).